The chain runs to 712 residues: Polyadenylation factor subunit 2 (712 aa).

Positions 1 to 37 (MTAPTVPADQHGHPLPGPADPAANDTWRPSRYREPLH) are disordered. 7 WD repeats span residues 131–170 (KERS…YESI), 173–213 (VHDD…HGFQ), 214–253 (GHRE…EERS), 256–295 (GHGW…DLST), 298–337 (SSKS…ELEV), 340–380 (GHEK…PSTP), and 387–426 (AHED…GGQE). 2 disordered regions span residues 446–473 (TKRE…KQQV) and 489–712 (KTGP…DGRR). Composition is skewed to gly residues over residues 460–469 (AGGGGGGGGD) and 494–504 (TTGGGPSGLPG). Residues 533–545 (QGQAQGGQFPRGR) show a composition bias toward low complexity. Basic and acidic residues predominate over residues 565-592 (FADRDRNGGGDRGGMDRDRDSRGGRQDP). Pro residues-rich tracts occupy residues 603 to 612 (GGPPPGPPPG) and 619 to 671 (PPAP…PQGP). Gly residues predominate over residues 678-712 (GGQGNYGASASGGYGQYGGGGGGGGGGGYGRDGRR).

It is found in the nucleus. Its function is as follows. Required for 3'-end cleavage and polyadenylation of pre-mRNAs. Also involved in chromosome segregation where it has a role in chromosome attachment to the mitotic spindle. The chain is Polyadenylation factor subunit 2 (PFS2) from Cryptococcus neoformans var. neoformans serotype D (strain JEC21 / ATCC MYA-565) (Filobasidiella neoformans).